A 636-amino-acid polypeptide reads, in one-letter code: TNFAIP3-interacting protein 1 (636 aa).

A coiled-coil region spans residues 20–73; it reads EASAAFERLVKENSRLKEKMQGIKMLGELLEESQMEATRLRQKAEELVKDNELL. The segment covering 61–71 has biased composition (basic and acidic residues); that stretch reads QKAEELVKDNE. Disordered stretches follow at residues 61–151 and 252–283; these read QKAE…GPLP and MSNG…QQQA. Ser77 bears the Phosphoserine mark. Positions 94–412 are interaction with Nef; the sequence is SNVTASPTAP…SPLTRQREYQ (319 aa). The span at 131–142 shows a compositional bias: polar residues; sequence EEQNSPESSSHA. Residues 196 to 258 are a coiled coil; it reads SKVHKNEQRT…KLLMSNGNKE (63 aa). A Phosphoserine modification is found at Ser284. Residues 294–535 are a coiled coil; sequence VALGAAEKKV…RKAKASGERY (242 aa). The tract at residues 351–367 is interaction with Shigella flexneri ipah9.8; the sequence is DLEAEREQKQRDFDRKL. Ser403 carries the phosphoserine modification. The segment at 431-588 is required for inhibitory activity of TNF-induced NF-kappa-B activation; it reads TPPSSPPTAF…MEHPPPLPNS (158 aa). At Thr438 the chain carries Phosphothreonine. Ser442 carries the post-translational modification Phosphoserine. The segment at 452–510 is ubiquitin-binding domain (UBD); the sequence is KQELVTQNELLKQQVKIFEEDFQRERSDRERMNEEKEELKKQVEKLQAQVTLSNAQLKA. The Nuclear localization signal motif lies at 524-530; it reads QKRKAKA. Tyr552 carries the phosphotyrosine modification. Position 571 is an asymmetric dimethylarginine (Arg571). Arg599 carries the post-translational modification Asymmetric dimethylarginine; alternate. At Arg599 the chain carries Omega-N-methylarginine; alternate. The interval 603–636 is disordered; it reads GGVRNPNQSSQVMDPPTARPTEPESPKNDREGPQ. Positions 623–636 are enriched in basic and acidic residues; that stretch reads TEPESPKNDREGPQ. Ser627 is subject to Phosphoserine.

As to quaternary structure, interacts with TNFAIP3 and IKBKG (polyubiquitinated); facilitates TNFAIP3-mediated de-ubiquitination of NEMO/IKBKG. Interacts with polyubiquitin. Interacts with MAPK1, SELPLG and PIK3CD. Interacts with IRAK1 (polyubiquitinated). Interacts with MYD88; the interaction is indicative for participation in an activated TLR-signaling complex. Interacts with HIV-1 matrix protein. Interacts with TAX1BP1. In terms of assembly, (Microbial infection) Interacts with Shigella flexneri ipah9.8; the interaction promotes polyubiquitination of IKBKG. In terms of processing, phosphorylation at Tyr-552 by SRC-family kinases recruits phosphoinositide-3-kinase (PI3K) PIK3CD:p85 heterodimer which results in integrin activation and leukocyte adhesion to activated endothelium during inflammation. In terms of tissue distribution, ubiquitous. Strongly expressed in peripheral blood lymphocytes, spleen and skeletal muscle, and is weakly expressed in the brain. In peripheral blood mononucleocytes, isoform 4 is mainly expressed and isoform 1 and isoform 7 are almost not expressed. Expression of isoform 1 and isoform 7 increases in leukemic cells.

Its subcellular location is the cytoplasm. It localises to the nucleus. In terms of biological role, inhibits NF-kappa-B activation and TNF-induced NF-kappa-B-dependent gene expression by regulating TAX1BP1 and A20/TNFAIP3-mediated deubiquitination of IKBKG; proposed to link A20/TNFAIP3 to ubiquitinated IKBKG. Involved in regulation of EGF-induced ERK1/ERK2 signaling pathway; blocks MAPK3/MAPK1 nuclear translocation and MAPK1-dependent transcription. Increases cell surface CD4(T4) antigen expression. Involved in the anti-inflammatory response of macrophages and positively regulates TLR-induced activation of CEBPB. Involved in the prevention of autoimmunity; this function implicates binding to polyubiquitin. Involved in leukocyte integrin activation during inflammation; this function is mediated by association with SELPLG and dependent on phosphorylation by SRC-family kinases. Interacts with HIV-1 matrix protein and is packaged into virions and overexpression can inhibit viral replication. May regulate matrix nuclear localization, both nuclear import of PIC (Preintegration complex) and export of GAG polyprotein and viral genomic RNA during virion production. In case of infection, promotes association of IKBKG with Shigella flexneri E3 ubiquitin-protein ligase ipah9.8 p which in turn promotes polyubiquitination of IKBKG leading to its proteasome-dependent degradation and thus is perturbing NF-kappa-B activation during bacterial infection. The sequence is that of TNFAIP3-interacting protein 1 (TNIP1) from Homo sapiens (Human).